Here is a 1040-residue protein sequence, read N- to C-terminus: Multidrug resistance protein MdtB (1040 aa).

12 helical membrane-spanning segments follow: residues 16-36 (FIMR…AGII), 347-367 (LMMA…NIPA), 369-389 (IIPG…MVFL), 396-416 (LTLM…IVVI), 440-460 (IGFT…PLLF), 472-492 (FAIT…TLTP), 537-557 (WLTL…WVFI), 863-883 (LGST…VLGI), 888-908 (FIHP…ALLA), 911-931 (IAGS…IGIV), 968-988 (ILMT…STGV), and 998-1018 (IGMV…TPVI).

Belongs to the resistance-nodulation-cell division (RND) (TC 2.A.6) family. MdtB subfamily. As to quaternary structure, part of a tripartite efflux system composed of MdtA, MdtB and MdtC. MdtB forms a heteromultimer with MdtC.

The protein localises to the cell inner membrane. Functionally, the MdtABC tripartite complex confers resistance against novobiocin and deoxycholate. The chain is Multidrug resistance protein MdtB from Escherichia coli O157:H7 (strain EC4115 / EHEC).